The primary structure comprises 81 residues: Photosystem I iron-sulfur center (81 aa).

4Fe-4S ferredoxin-type domains follow at residues 2 to 31 (SHSVKIYDTCIGCTQCVRACPTDVLEMIPW) and 39 to 68 (IASAPRTEDCVGCKRCESACPTDFLSVRVY). [4Fe-4S] cluster is bound by residues Cys-11, Cys-14, Cys-17, Cys-21, Cys-48, Cys-51, Cys-54, and Cys-58.

The eukaryotic PSI reaction center is composed of at least 11 subunits. Requires [4Fe-4S] cluster as cofactor.

The protein resides in the plastid. It is found in the chloroplast thylakoid membrane. It catalyses the reaction reduced [plastocyanin] + hnu + oxidized [2Fe-2S]-[ferredoxin] = oxidized [plastocyanin] + reduced [2Fe-2S]-[ferredoxin]. Its function is as follows. Apoprotein for the two 4Fe-4S centers FA and FB of photosystem I (PSI); essential for photochemical activity. FB is the terminal electron acceptor of PSI, donating electrons to ferredoxin. The C-terminus interacts with PsaA/B/D and helps assemble the protein into the PSI complex. Required for binding of PsaD and PsaE to PSI. PSI is a plastocyanin-ferredoxin oxidoreductase, converting photonic excitation into a charge separation, which transfers an electron from the donor P700 chlorophyll pair to the spectroscopically characterized acceptors A0, A1, FX, FA and FB in turn. The chain is Photosystem I iron-sulfur center from Phalaenopsis aphrodite subsp. formosana (Moth orchid).